The chain runs to 309 residues: Olfactory receptor-like protein OLF4 (309 aa).

Residues 1–25 (MELENDTRIPEFLLLGFSEEPKLQP) lie on the Extracellular side of the membrane. Residue asparagine 5 is glycosylated (N-linked (GlcNAc...) asparagine). Residues 26 to 49 (FLFGLFLSMYLVTILGNLLLILAV) traverse the membrane as a helical segment. The Cytoplasmic portion of the chain corresponds to 50 to 57 (SSDSHLHT). A helical membrane pass occupies residues 58 to 79 (PMYFFLANLSFVDICFTCTTIP). Over 80-100 (KMLVNIQTQRKVITYESCIIQ) the chain is Extracellular. A helical transmembrane segment spans residues 101-120 (MYFFELFAGIDNFLLTVMAY). Residues 121 to 139 (DRYMAICYPLHYMVIMNPQ) lie on the Cytoplasmic side of the membrane. Residues 140 to 158 (LCSLLLLVSWIMSALHSLL) form a helical membrane-spanning segment. The Extracellular segment spans residues 159–196 (QTLMVLRLSFCTHFQIPHFFCELNQMIQLACSDTFLNN). A helical transmembrane segment spans residues 197–219 (MMLYFAAILLGVAPLVGVLYSYF). The Cytoplasmic portion of the chain corresponds to 220-236 (KIVSSIRGISSAHSKYK). Residues 237-260 (AFSTCASHLSVVSLFYCTSLGVYL) form a helical membrane-spanning segment. Residues 261 to 272 (SSAAPQSTHTSS) lie on the Extracellular side of the membrane. Residues 273 to 292 (VASVMYTVVTPMLNPFIYSL) traverse the membrane as a helical segment. The Cytoplasmic portion of the chain corresponds to 293 to 309 (RNKDIKGALNVFFRGKP).

The protein belongs to the G-protein coupled receptor 1 family.

The protein resides in the cell membrane. Putative odorant or sperm cell receptor. In Canis lupus familiaris (Dog), this protein is Olfactory receptor-like protein OLF4.